A 122-amino-acid polypeptide reads, in one-letter code: EVKLVESGGGLVQPGGSLRLSCATSGFTFSDFYMEWVRQPPGKRLEWIAASRNKGNKYTTEYSASVKGRFIVSRDTSQSILYLQMNALRAEDTAIYYCARNYYGSTWYFDVWGAGTTVTVSS.

An Ig-like domain is found at 1-121 (EVKLVESGGG…WGAGTTVTVS (121 aa)).

The chain is Ig heavy chain V region M603 from Mus musculus (Mouse).